Here is a 203-residue protein sequence, read N- to C-terminus: Imidazoleglycerol-phosphate dehydratase (203 aa).

It belongs to the imidazoleglycerol-phosphate dehydratase family.

It localises to the cytoplasm. It carries out the reaction D-erythro-1-(imidazol-4-yl)glycerol 3-phosphate = 3-(imidazol-4-yl)-2-oxopropyl phosphate + H2O. It functions in the pathway amino-acid biosynthesis; L-histidine biosynthesis; L-histidine from 5-phospho-alpha-D-ribose 1-diphosphate: step 6/9. The sequence is that of Imidazoleglycerol-phosphate dehydratase from Parvibaculum lavamentivorans (strain DS-1 / DSM 13023 / NCIMB 13966).